Here is a 225-residue protein sequence, read N- to C-terminus: MAFTSAVITFPGSNCDRDMAVAIEQVCGGTVHRVWHGDADLPEGLDFIALPGGFSYGDYLRSGAMAARSPVMQAVVRAAERGVTVLGVCNGFQVLTEAGLLPGALMRNAGIRFVCRDVKLTVENNQSLFTAGYDAGQQITIPVAHHDGNYFADDATLDRIEGEGRVAFRYAEEVNGSARNIAGVLNDRGNVLGMMPHPERMIEAAHGGSDGRALFESVVRGLVEA.

A Glutamine amidotransferase type-1 domain is found at 5-225 (SAVITFPGSN…ESVVRGLVEA (221 aa)). Cysteine 89 serves as the catalytic Nucleophile. Active-site residues include histidine 197 and glutamate 199.

As to quaternary structure, part of the FGAM synthase complex composed of 1 PurL, 1 PurQ and 2 PurS subunits.

It localises to the cytoplasm. It catalyses the reaction N(2)-formyl-N(1)-(5-phospho-beta-D-ribosyl)glycinamide + L-glutamine + ATP + H2O = 2-formamido-N(1)-(5-O-phospho-beta-D-ribosyl)acetamidine + L-glutamate + ADP + phosphate + H(+). The catalysed reaction is L-glutamine + H2O = L-glutamate + NH4(+). It participates in purine metabolism; IMP biosynthesis via de novo pathway; 5-amino-1-(5-phospho-D-ribosyl)imidazole from N(2)-formyl-N(1)-(5-phospho-D-ribosyl)glycinamide: step 1/2. Functionally, part of the phosphoribosylformylglycinamidine synthase complex involved in the purines biosynthetic pathway. Catalyzes the ATP-dependent conversion of formylglycinamide ribonucleotide (FGAR) and glutamine to yield formylglycinamidine ribonucleotide (FGAM) and glutamate. The FGAM synthase complex is composed of three subunits. PurQ produces an ammonia molecule by converting glutamine to glutamate. PurL transfers the ammonia molecule to FGAR to form FGAM in an ATP-dependent manner. PurS interacts with PurQ and PurL and is thought to assist in the transfer of the ammonia molecule from PurQ to PurL. The polypeptide is Phosphoribosylformylglycinamidine synthase subunit PurQ (Novosphingobium aromaticivorans (strain ATCC 700278 / DSM 12444 / CCUG 56034 / CIP 105152 / NBRC 16084 / F199)).